A 334-amino-acid chain; its full sequence is Lipoyl synthase (334 aa).

The disordered stretch occupies residues Met-1–Ala-36. The segment covering Ala-7–Ala-20 has biased composition (low complexity). The segment covering Glu-21–Ala-36 has biased composition (basic and acidic residues). The [4Fe-4S] cluster site is built by Cys-81, Cys-86, Cys-92, Cys-107, Cys-111, Cys-114, and Ser-321. A Radical SAM core domain is found at Cys-92–Thr-310.

This sequence belongs to the radical SAM superfamily. Lipoyl synthase family. [4Fe-4S] cluster serves as cofactor.

It is found in the cytoplasm. The enzyme catalyses [[Fe-S] cluster scaffold protein carrying a second [4Fe-4S](2+) cluster] + N(6)-octanoyl-L-lysyl-[protein] + 2 oxidized [2Fe-2S]-[ferredoxin] + 2 S-adenosyl-L-methionine + 4 H(+) = [[Fe-S] cluster scaffold protein] + N(6)-[(R)-dihydrolipoyl]-L-lysyl-[protein] + 4 Fe(3+) + 2 hydrogen sulfide + 2 5'-deoxyadenosine + 2 L-methionine + 2 reduced [2Fe-2S]-[ferredoxin]. Its pathway is protein modification; protein lipoylation via endogenous pathway; protein N(6)-(lipoyl)lysine from octanoyl-[acyl-carrier-protein]: step 2/2. In terms of biological role, catalyzes the radical-mediated insertion of two sulfur atoms into the C-6 and C-8 positions of the octanoyl moiety bound to the lipoyl domains of lipoate-dependent enzymes, thereby converting the octanoylated domains into lipoylated derivatives. The polypeptide is Lipoyl synthase (Cupriavidus taiwanensis (strain DSM 17343 / BCRC 17206 / CCUG 44338 / CIP 107171 / LMG 19424 / R1) (Ralstonia taiwanensis (strain LMG 19424))).